The sequence spans 174 residues: Ly6/PLAUR domain-containing protein 6 (174 aa).

The signal sequence occupies residues 1 to 22; that stretch reads MEPWPLMAWGLMLTAITGWIKA. The region spanning 47 to 141 is the UPAR/Ly6 domain; it reads FKCFTCEDAP…PRNETDAIFS (95 aa). Intrachain disulfides connect Cys49/Cys77, Cys52/Cys61, Cys70/Cys96, Cys102/Cys121, Cys107/Cys118, and Cys122/Cys127. Residues Asn134 and Asn147 are each glycosylated (N-linked (GlcNAc...) asparagine). A lipid anchor (GPI-anchor amidated serine) is attached at Ser149. Residues 150-174 constitute a propeptide, removed in mature form; that stretch reads AQSTQTLPLLLLSVSITSLMLHSIN.

As to quaternary structure, interacts with fzd8 and lrp6.

It is found in the cell membrane. Its subcellular location is the membrane raft. Its function is as follows. Acts as an important regulator of embryogenesis through its enhancement of Wnt/beta-catenin signaling. Positively regulates Wnt/beta-catenin signaling by ensuring phosphorylation of lrp6 specifically in plasma membrane rafts and its subsequent internalization into signaling-competent vesicles. Essential for the wnt8-mediated patterning of the mesoderm and neuroectoderm during gastrulation. In Danio rerio (Zebrafish), this protein is Ly6/PLAUR domain-containing protein 6 (lypd6).